Here is a 129-residue protein sequence, read N- to C-terminus: Phenazine antibiotic resistance protein EhpR (129 aa).

One can recognise a VOC domain in the interval 10 to 128 (TPNLQLVYVS…DGHIIRVCPL (119 aa)). D-alanylgriseoluteate is bound by residues 42 to 43 (RY) and W57.

Homodimer.

In terms of biological role, required for resistance to the phenazine antibiotic D-alanylgriseoluteic acid (AGA), an antibiotic produced by E.agglomerans itself, and thus protects the bacterium against phenazine toxicity. Probably binds AGA and acts as a chaperone that works in tandem with a membrane transporter for subsequent antibiotic secretion. This chain is Phenazine antibiotic resistance protein EhpR, found in Enterobacter agglomerans (Erwinia herbicola).